Here is a 372-residue protein sequence, read N- to C-terminus: tRNA-specific 2-thiouridylase MnmA (372 aa).

ATP is bound by residues 16 to 23 (GMSGGVDS) and Met-42. Residues 102 to 104 (NPD) are interaction with target base in tRNA. Cys-107 acts as the Nucleophile in catalysis. An intrachain disulfide couples Cys-107 to Cys-205. Gly-132 serves as a coordination point for ATP. Residues 155 to 157 (KDQ) are interaction with tRNA. Cys-205 serves as the catalytic Cysteine persulfide intermediate. The tract at residues 317-318 (RY) is interaction with tRNA.

It belongs to the MnmA/TRMU family.

It is found in the cytoplasm. It carries out the reaction S-sulfanyl-L-cysteinyl-[protein] + uridine(34) in tRNA + AH2 + ATP = 2-thiouridine(34) in tRNA + L-cysteinyl-[protein] + A + AMP + diphosphate + H(+). Functionally, catalyzes the 2-thiolation of uridine at the wobble position (U34) of tRNA, leading to the formation of s(2)U34. The polypeptide is tRNA-specific 2-thiouridylase MnmA (Shewanella sp. (strain ANA-3)).